A 99-amino-acid polypeptide reads, in one-letter code: Large ribosomal subunit protein uL23 (99 aa).

The protein belongs to the universal ribosomal protein uL23 family. As to quaternary structure, part of the 50S ribosomal subunit. Contacts protein L29, and trigger factor when it is bound to the ribosome.

One of the early assembly proteins it binds 23S rRNA. One of the proteins that surrounds the polypeptide exit tunnel on the outside of the ribosome. Forms the main docking site for trigger factor binding to the ribosome. This Ectopseudomonas mendocina (strain ymp) (Pseudomonas mendocina) protein is Large ribosomal subunit protein uL23.